The following is a 1530-amino-acid chain: Glutamate-rich protein 3 (1530 aa).

Disordered stretches follow at residues 165 to 187 (RLQP…RSRS), 408 to 429 (SLPK…KAEG), 475 to 661 (MTSK…PMPI), 673 to 724 (TEKG…GLEE), 773 to 870 (EAME…AVGL), 923 to 1146 (REAA…LLGE), 1167 to 1334 (LENI…GMGG), 1360 to 1383 (LAGS…DVAE), and 1425 to 1530 (YTTE…NVQV). Basic and acidic residues-rich tracts occupy residues 415–429 (EKST…KAEG), 531–545 (LDDK…KESE), and 552–562 (PDARDNVKDEN). Residues 563 to 574 (DGCSESELEEDK) show a composition bias toward acidic residues. Positions 581 to 592 (SSTSSRSHPYSS) are enriched in low complexity. Over residues 600–616 (VGDREAHTDSSTDESAR) the composition is skewed to basic and acidic residues. Acidic residues predominate over residues 638–647 (ESLEIEIEDQ). Composition is skewed to basic and acidic residues over residues 684-717 (LSEK…DKKA) and 773-787 (EAME…RDAD). Residues 834-845 (GIERGAEGAAEA) are compositionally biased toward low complexity. Over residues 943-958 (GESEEEASIDLEDTGP) the composition is skewed to acidic residues. Composition is skewed to basic and acidic residues over residues 979–992 (EPAK…RTET), 1039–1116 (EANR…EETK), and 1173–1212 (LRKE…RQDG). A compositionally biased stretch (low complexity) spans 1213-1225 (EGALAAPEAEPAG). Over residues 1289–1300 (AVDEDPEEEEDK) the composition is skewed to acidic residues. 2 stretches are compositionally biased toward basic and acidic residues: residues 1464 to 1487 (GRQE…RELS) and 1502 to 1511 (DFTETREKQQ). Positions 1517–1530 (ESETADVSPNNVQV) are enriched in polar residues.

As to quaternary structure, interacts with CLTC/clathrin heavy chain 1, AP2A2/AP-2 complex subunit alpha-2, and PIK3C2A/phosphatidylinositol 4-phosphate 3-kinase C2 domain-containing subunit alpha. Expressed in dopaminergic and serotoninergic neurons.

Its subcellular location is the cell projection. The protein localises to the cilium. The protein resides in the cytoplasm. Its function is as follows. Component of the primary cilium that controls cilium formation and length. May function within retrograde intraflagellar transport (IFT)-associated pathways to remove signaling proteins from primary cilia. Also involved in neuronal vesicle biogenesis and neurotransmitter vesicular function. This chain is Glutamate-rich protein 3, found in Homo sapiens (Human).